The following is a 154-amino-acid chain: Ribonuclease H (154 aa).

An RNase H type-1 domain is found at 1–142; it reads MLKKIDLYTD…CDELAREAAS (142 aa). Mg(2+) is bound by residues Asp10, Glu48, Asp70, and Asp134. Residues 133–154 are disordered; the sequence is CDELAREAASGKQLAEDTGYQP.

This sequence belongs to the RNase H family. In terms of assembly, monomer. Mg(2+) is required as a cofactor.

It is found in the cytoplasm. The enzyme catalyses Endonucleolytic cleavage to 5'-phosphomonoester.. Its function is as follows. Endonuclease that specifically degrades the RNA of RNA-DNA hybrids. This chain is Ribonuclease H, found in Aeromonas hydrophila subsp. hydrophila (strain ATCC 7966 / DSM 30187 / BCRC 13018 / CCUG 14551 / JCM 1027 / KCTC 2358 / NCIMB 9240 / NCTC 8049).